Here is a 449-residue protein sequence, read N- to C-terminus: MAQFFKAKPNSSKQLSAKQSFSVHQLDHLGAGIAQHQGKVVFIPGALPSETVQAQLTEQKKNYARAKLIKVETPSAERVTPLCPHYQSCGGCDLQHMSLAGQREHKSAALVDIMAKFAGAEGNSVPALTGEGWHYRRRARLATLFDKNTKQLSLGFRASSSNQVVPIDSCLVLAKPLSDLIAPFAKLLNQLAAKSSLGHLELIDADNGHFAVIRITKSLNDKDMAKLAQFAEHHQIHICLQDNNGEFHGVNGTLLLPVYQLLDDKAGATPVSLTFTPGNFVQVNAQINKAMVAQALDWLAPQPGERILDLFCGMGNFSLPLAKLGAEVIGVEGVPDMVSQARENAAANGLSNLTFYHGDLSADLSCEPWMGKIDKLLLDPARAGAFESLQWLKKMKPRQVVYVSCNPASLARDSAVLLERGYKLQKLGLIDMFPQTHHIEAMALFELAK.

The TRAM domain maps to 12–70 (SKQLSAKQSFSVHQLDHLGAGIAQHQGKVVFIPGALPSETVQAQLTEQKKNYARAKLIK). 4 residues coordinate [4Fe-4S] cluster: C83, C89, C92, and C170. S-adenosyl-L-methionine is bound by residues Q282, F311, N316, E332, D359, and D379. Catalysis depends on C405, which acts as the Nucleophile.

The protein belongs to the class I-like SAM-binding methyltransferase superfamily. RNA M5U methyltransferase family. RlmD subfamily.

The catalysed reaction is uridine(1939) in 23S rRNA + S-adenosyl-L-methionine = 5-methyluridine(1939) in 23S rRNA + S-adenosyl-L-homocysteine + H(+). Catalyzes the formation of 5-methyl-uridine at position 1939 (m5U1939) in 23S rRNA. The polypeptide is 23S rRNA (uracil(1939)-C(5))-methyltransferase RlmD (Shewanella sp. (strain MR-4)).